An 805-amino-acid polypeptide reads, in one-letter code: BLOC-2 complex member HPS6 (805 aa).

Residues 743–805 (GAQGRPSGPV…LGAADVGVHL (63 aa)) form a disordered region. Over residues 764-773 (GTPPPTPPRG) the composition is skewed to pro residues.

In terms of assembly, component of the biogenesis of lysosome-related organelles complex-2 (or BLOC2) composed of HPS3, HPS5 and HPS6. Interacts with HPS5 and HPS3. Interacts with biogenesis of lysosome-related organelles complex-1 (BLOC1). Interacts with dynein intermediate chain. Interacts with AP-3 complex. Interacts with DCTN1. In terms of tissue distribution, widely expressed, with lowest expression in skeletal muscle.

It localises to the microsome membrane. Its subcellular location is the cytoplasm. It is found in the cytosol. The protein resides in the early endosome membrane. The protein localises to the lysosome membrane. Its function is as follows. May regulate the synthesis and function of lysosomes and of highly specialized organelles, such as melanosomes and platelet dense granules. Acts as a cargo adapter for the dynein-dynactin motor complex to mediate the transport of lysosomes from the cell periphery to the perinuclear region. Facilitates retrograde lysosomal trafficking by linking the motor complex to lysosomes, and perinuclear positioning of lysosomes is crucial for the delivery of endocytic cargos to lysosomes, for lysosome maturation and functioning. The chain is BLOC-2 complex member HPS6 (Hps6) from Mus musculus (Mouse).